Reading from the N-terminus, the 281-residue chain is MGSCAQGFMLGCCLLLAITWGPILSLVPRVQEEQQEWEETEELPSPLDPVTRPEETREKYSPRQGEDLPTSRCYRCCDPSTPVYQTIPPPQINITILKGEKGDRGDRGLQGKYGKIGSTGPRGHVGPKGQKGSIGAPGNHCKSQYAAFSVGRKKALHSNDYFQPVVFDTEFVNLYKHFNMFTGKFYCYVPGIYFFSLNVHTWNQKETYLHIMKNEEEVVILYAQVSDRSIMQSQSLMMELREEDEVWVRLFKGERENAIFSDEFDTYITFSGYLVKPASEP.

Positions 1 to 25 (MGSCAQGFMLGCCLLLAITWGPILS) are cleaved as a signal peptide. A disordered region spans residues 35-68 (QEWEETEELPSPLDPVTRPEETREKYSPRQGEDL). Residues 51–66 (TRPEETREKYSPRQGE) show a composition bias toward basic and acidic residues. The N-linked (GlcNAc...) asparagine glycan is linked to N93. The Collagen-like domain occupies 99–140 (GEKGDRGDRGLQGKYGKIGSTGPRGHVGPKGQKGSIGAPGNH). A disordered region spans residues 107–136 (RGLQGKYGKIGSTGPRGHVGPKGQKGSIGA). The C1q domain maps to 141–281 (CKSQYAAFSV…GYLVKPASEP (141 aa)).

The protein localises to the secreted. The chain is Complement C1q tumor necrosis factor-related protein 1 (C1qtnf1) from Mus musculus (Mouse).